Consider the following 199-residue polypeptide: Ribonuclease P protein subunit p25 (199 aa).

A compositionally biased stretch (basic and acidic residues) spans 1-11 (MENFRKVRSEE). Disordered stretches follow at residues 1 to 31 (MENF…FADL) and 146 to 199 (PRQL…DRTA). Ser-172 bears the Phosphoserine mark. Residues 190–199 (PEAENEDRTA) are compositionally biased toward acidic residues.

Belongs to the histone-like Alba family. In terms of assembly, component of nuclear RNase P and RNase MRP ribonucleoproteins. RNase P consists of a catalytic RNA moiety and 10 different protein chains; POP1, POP4, POP5, POP7, RPP14, RPP21, RPP25, RPP30, RPP38 and RPP40. Within the RNase P complex, POP1, POP7 and RPP25 form the 'finger' subcomplex, POP5, RPP14, RPP40 and homodimeric RPP30 form the 'palm' subcomplex, and RPP21, POP4 and RPP38 form the 'wrist' subcomplex. All subunits of the RNase P complex interact with the catalytic RNA. Several subunits of RNase P are also part of the RNase MRP complex. RNase MRP consists of a catalytic RNA moiety and about 8 protein subunits; POP1, POP7, RPP25, RPP30, RPP38, RPP40 and possibly also POP4 and POP5. POP7 forms a heterodimer with RPP25 that binds to the P3 stem loop of the catalytic RNA.

The protein resides in the nucleus. Its subcellular location is the nucleolus. In terms of biological role, component of ribonuclease P, a ribonucleoprotein complex that generates mature tRNA molecules by cleaving their 5'-ends. Also a component of the MRP ribonuclease complex, which cleaves pre-rRNA sequences. The polypeptide is Ribonuclease P protein subunit p25 (Rpp25) (Mus musculus (Mouse)).